Reading from the N-terminus, the 501-residue chain is Aldehyde dehydrogenase 1A1 (501 aa).

Serine 2 carries the N-acetylserine modification. Lysine 91 and lysine 128 each carry N6-acetyllysine. NAD(+) is bound by residues 167–170 (IPWN), 193–196 (KPAE), 226–227 (GP), and 246–247 (GS). The residue at position 252 (lysine 252) is an N6-acetyllysine. Glutamate 269 (proton acceptor) is an active-site residue. 269 to 271 (ELG) contributes to the NAD(+) binding site. The active-site Nucleophile is cysteine 303. Positions 336-501 (LNSGINQGPQ…VAIKISQKNS (166 aa)) are mediates interaction with PRMT3. Residue 349–353 (EQHDK) coordinates NAD(+). 2 positions are modified to N6-acetyllysine: lysine 353 and lysine 367. Residue 400–402 (EIF) participates in NAD(+) binding. N6-acetyllysine is present on lysine 410. Serine 413 bears the Phosphoserine mark. Lysine 419, lysine 435, and lysine 495 each carry N6-acetyllysine.

Belongs to the aldehyde dehydrogenase family. In terms of assembly, homotetramer. Interacts with PRMT3; the interaction is direct, inhibits ALDH1A1 aldehyde dehydrogenase activity and is independent of the methyltransferase activity of PRMT3. In terms of processing, the N-terminus is blocked most probably by acetylation.

It localises to the cytoplasm. Its subcellular location is the cytosol. It is found in the cell projection. The protein resides in the axon. It catalyses the reaction an aldehyde + NAD(+) + H2O = a carboxylate + NADH + 2 H(+). The catalysed reaction is all-trans-retinal + NAD(+) + H2O = all-trans-retinoate + NADH + 2 H(+). The enzyme catalyses 9-cis-retinal + NAD(+) + H2O = 9-cis-retinoate + NADH + 2 H(+). It carries out the reaction 11-cis-retinal + NAD(+) + H2O = 11-cis-retinoate + NADH + 2 H(+). It catalyses the reaction 13-cis-retinal + NAD(+) + H2O = 13-cis-retinoate + NADH + 2 H(+). The catalysed reaction is 3-deoxyglucosone + NAD(+) + H2O = 2-dehydro-3-deoxy-D-gluconate + NADH + 2 H(+). The enzyme catalyses (E)-4-hydroxynon-2-enal + NAD(+) + H2O = (E)-4-hydroxynon-2-enoate + NADH + 2 H(+). It carries out the reaction malonaldehyde + NAD(+) + H2O = 3-oxopropanoate + NADH + 2 H(+). It catalyses the reaction hexanal + NAD(+) + H2O = hexanoate + NADH + 2 H(+). The catalysed reaction is propanal + NAD(+) + H2O = propanoate + NADH + 2 H(+). The enzyme catalyses acetaldehyde + NAD(+) + H2O = acetate + NADH + 2 H(+). It carries out the reaction benzaldehyde + NAD(+) + H2O = benzoate + NADH + 2 H(+). It catalyses the reaction 4-aminobutanal + NAD(+) + H2O = 4-aminobutanoate + NADH + 2 H(+). Its pathway is cofactor metabolism; retinol metabolism. In terms of biological role, cytosolic dehydrogenase that catalyzes the irreversible oxidation of a wide range of aldehydes to their corresponding carboxylic acid. Functions downstream of retinol dehydrogenases and catalyzes the oxidation of retinaldehyde into retinoic acid, the second step in the oxidation of retinol/vitamin A into retinoic acid. This pathway is crucial to control the levels of retinol and retinoic acid, two important molecules which excess can be teratogenic and cytotoxic. Also oxidizes aldehydes resulting from lipid peroxidation like (E)-4-hydroxynon-2-enal/HNE, malonaldehyde and hexanal that form protein adducts and are highly cytotoxic. By participating for instance to the clearance of (E)-4-hydroxynon-2-enal/HNE in the lens epithelium prevents the formation of HNE-protein adducts and lens opacification. Also functions downstream of fructosamine-3-kinase in the fructosamine degradation pathway by catalyzing the oxidation of 3-deoxyglucosone, the carbohydrate product of fructosamine 3-phosphate decomposition, which is itself a potent glycating agent that may react with lysine and arginine side-chains of proteins. Also has an aminobutyraldehyde dehydrogenase activity and is probably part of an alternative pathway for the biosynthesis of GABA/4-aminobutanoate in midbrain, thereby playing a role in GABAergic synaptic transmission. This Mesocricetus auratus (Golden hamster) protein is Aldehyde dehydrogenase 1A1.